The following is a 265-amino-acid chain: MLEISFIPAFKDNYIWLLTRGKRAFVVDPGDAAPVLARLEAGGLMLEGILITHHHADHQGGVAELKARWQAEVYAPGNESITGCSCPLSGGESIDVLGQKVTVMAVPGHTLGHLAYYAPGALLCGDTLFGAGCGRLFEGTPAQMSASLDSIAALPGDTLIYCAHEYTEMNLRFALAVEPNNQALQARVAKVAALRAAGLPSVPLILAEEKATNPFLRCHEAAVVEAGLQHAASCLLGHAAQQGADIEDRSKTAIFAAIRSWRNTF.

Residues His53, His55, Asp57, His58, His109, Asp126, and His164 each coordinate Zn(2+).

Belongs to the metallo-beta-lactamase superfamily. Glyoxalase II family. Monomer. Zn(2+) serves as cofactor.

The enzyme catalyses an S-(2-hydroxyacyl)glutathione + H2O = a 2-hydroxy carboxylate + glutathione + H(+). The protein operates within secondary metabolite metabolism; methylglyoxal degradation; (R)-lactate from methylglyoxal: step 2/2. In terms of biological role, thiolesterase that catalyzes the hydrolysis of S-D-lactoyl-glutathione to form glutathione and D-lactic acid. This Dechloromonas aromatica (strain RCB) protein is Hydroxyacylglutathione hydrolase.